Reading from the N-terminus, the 133-residue chain is UPF0102 protein ABSDF1354 (133 aa).

Belongs to the UPF0102 family.

In Acinetobacter baumannii (strain SDF), this protein is UPF0102 protein ABSDF1354.